We begin with the raw amino-acid sequence, 622 residues long: Palmitoyltransferase ZDHHC13 (622 aa).

Met1 is modified (N-acetylmethionine). At Met1–Glu291 the chain is on the cytoplasmic side. ANK repeat units follow at residues Pro43–Pro78, Glu81–Gln110, Leu115–Leu144, Glu148–Met177, Asn181–Val211, His216–Ile245, and Lys249–Ala277. The chain crosses the membrane as a helical span at residues Leu292–Phe312. The Lumenal portion of the chain corresponds to Asn313–Lys320. A helical membrane pass occupies residues Gly321–Tyr341. The Cytoplasmic segment spans residues Lys342–Leu347. A helical transmembrane segment spans residues Pro348–Phe368. The Lumenal segment spans residues Pro369–Thr371. The chain crosses the membrane as a helical span at residues Ala372–Tyr392. The Cytoplasmic portion of the chain corresponds to Lys393–His470. One can recognise a DHHC domain in the interval Thr426–Leu476. Cys456 functions as the S-palmitoyl cysteine intermediate in the catalytic mechanism. A helical membrane pass occupies residues Tyr471 to Val491. Residues Tyr492–Pro518 lie on the Lumenal side of the membrane. A helical transmembrane segment spans residues Trp519–Ile539. The Cytoplasmic portion of the chain corresponds to Asn540 to Val622.

It belongs to the DHHC palmitoyltransferase family. AKR/ZDHHC17 subfamily. As to quaternary structure, interacts (via ANK repeats) with CLIP3. Interacts (via ANK repeats) with DNAJC5 (via C-terminus). Interacts (via ANK repeats) with HTT. Interacts (via ANK repeats) with MAP6. Interacts (via ANK repeats) with SNAP23. Interacts (via ANK repeats) with SNAP25. May interact (via ANK repeats) with SPRED2. Expressed in most adult tissues, but at low levels in the liver, skin, and lung.

It is found in the golgi apparatus membrane. The protein localises to the cytoplasmic vesicle membrane. The catalysed reaction is L-cysteinyl-[protein] + hexadecanoyl-CoA = S-hexadecanoyl-L-cysteinyl-[protein] + CoA. Functionally, palmitoyltransferase that could catalyze the addition of palmitate onto various protein substrates. Palmitoyltransferase for HTT and GAD2. May play a role in Mg(2+) transport. The chain is Palmitoyltransferase ZDHHC13 from Mus musculus (Mouse).